Here is a 291-residue protein sequence, read N- to C-terminus: uncharacterized protein (291 aa).

The 138-residue stretch at 68 to 205 folds into the DAGKc domain; sequence PVAVSASFLW…VIQLWARPRG (138 aa).

This is an uncharacterized protein from Mycobacterium tuberculosis (strain CDC 1551 / Oshkosh).